Consider the following 634-residue polypeptide: DNA-directed RNA polymerase subunit gamma (634 aa).

4 residues coordinate Zn(2+): Cys74, Cys76, Cys89, and Cys92. Residues Asp471, Asp473, and Asp475 each coordinate Mg(2+).

It belongs to the RNA polymerase beta' chain family. RpoC1 subfamily. As to quaternary structure, in cyanobacteria the RNAP catalytic core is composed of 2 alpha, 1 beta, 1 beta', 1 gamma and 1 omega subunit. When a sigma factor is associated with the core the holoenzyme is formed, which can initiate transcription. Requires Mg(2+) as cofactor. Zn(2+) is required as a cofactor.

It carries out the reaction RNA(n) + a ribonucleoside 5'-triphosphate = RNA(n+1) + diphosphate. DNA-dependent RNA polymerase catalyzes the transcription of DNA into RNA using the four ribonucleoside triphosphates as substrates. This chain is DNA-directed RNA polymerase subunit gamma, found in Prochlorococcus marinus subsp. pastoris (strain CCMP1986 / NIES-2087 / MED4).